Consider the following 207-residue polypeptide: Small ribosomal subunit protein uS4c (207 aa).

Residues 92 to 156 (MRLDNILFRL…YQSIITKRIE (65 aa)) enclose the S4 RNA-binding domain.

The protein belongs to the universal ribosomal protein uS4 family. Part of the 30S ribosomal subunit. Contacts protein S5. The interaction surface between S4 and S5 is involved in control of translational fidelity.

The protein localises to the plastid. It localises to the chloroplast. In terms of biological role, one of the primary rRNA binding proteins, it binds directly to 16S rRNA where it nucleates assembly of the body of the 30S subunit. Functionally, with S5 and S12 plays an important role in translational accuracy. This chain is Small ribosomal subunit protein uS4c (rps4), found in Equisetum palustre (Marsh horsetail).